A 163-amino-acid polypeptide reads, in one-letter code: UPF0478 protein SERP1299 (163 aa).

A helical transmembrane segment spans residues 7 to 27 (IAGIIAAIAFLILCIGIVVVL).

This sequence belongs to the UPF0478 family.

Its subcellular location is the cell membrane. The protein is UPF0478 protein SERP1299 of Staphylococcus epidermidis (strain ATCC 35984 / DSM 28319 / BCRC 17069 / CCUG 31568 / BM 3577 / RP62A).